A 280-amino-acid polypeptide reads, in one-letter code: 4-deoxy-L-threo-5-hexosulose-uronate ketol-isomerase (280 aa).

Positions 198, 200, 205, and 247 each coordinate Zn(2+).

Belongs to the KduI family. It depends on Zn(2+) as a cofactor.

The catalysed reaction is 5-dehydro-4-deoxy-D-glucuronate = 3-deoxy-D-glycero-2,5-hexodiulosonate. The protein operates within glycan metabolism; pectin degradation; 2-dehydro-3-deoxy-D-gluconate from pectin: step 4/5. Functionally, catalyzes the isomerization of 5-dehydro-4-deoxy-D-glucuronate to 3-deoxy-D-glycero-2,5-hexodiulosonate. The sequence is that of 4-deoxy-L-threo-5-hexosulose-uronate ketol-isomerase from Bacteroides fragilis (strain ATCC 25285 / DSM 2151 / CCUG 4856 / JCM 11019 / LMG 10263 / NCTC 9343 / Onslow / VPI 2553 / EN-2).